The chain runs to 215 residues: Large ribosomal subunit protein bL25 (215 aa).

The segment at 174-215 is disordered; that stretch reads ETVVTVQPPATEKEEETEAAVTDSEPEVINEKEEPAEEAKEE. The span at 186–215 shows a compositional bias: acidic residues; that stretch reads KEEETEAAVTDSEPEVINEKEEPAEEAKEE.

Belongs to the bacterial ribosomal protein bL25 family. CTC subfamily. Part of the 50S ribosomal subunit; part of the 5S rRNA/L5/L18/L25 subcomplex. Contacts the 5S rRNA. Binds to the 5S rRNA independently of L5 and L18.

Its function is as follows. This is one of the proteins that binds to the 5S RNA in the ribosome where it forms part of the central protuberance. The protein is Large ribosomal subunit protein bL25 of Halalkalibacterium halodurans (strain ATCC BAA-125 / DSM 18197 / FERM 7344 / JCM 9153 / C-125) (Bacillus halodurans).